Here is a 334-residue protein sequence, read N- to C-terminus: Aspartate carbamoyltransferase catalytic subunit (334 aa).

Residues Arg-70 and Thr-71 each contribute to the carbamoyl phosphate site. Residue Lys-98 participates in L-aspartate binding. Arg-120, His-150, and Gln-153 together coordinate carbamoyl phosphate. Arg-183 and Arg-239 together coordinate L-aspartate. Carbamoyl phosphate-binding residues include Gly-280 and Pro-281.

Belongs to the aspartate/ornithine carbamoyltransferase superfamily. ATCase family. In terms of assembly, heterododecamer (2C3:3R2) of six catalytic PyrB chains organized as two trimers (C3), and six regulatory PyrI chains organized as three dimers (R2).

It catalyses the reaction carbamoyl phosphate + L-aspartate = N-carbamoyl-L-aspartate + phosphate + H(+). The protein operates within pyrimidine metabolism; UMP biosynthesis via de novo pathway; (S)-dihydroorotate from bicarbonate: step 2/3. Catalyzes the condensation of carbamoyl phosphate and aspartate to form carbamoyl aspartate and inorganic phosphate, the committed step in the de novo pyrimidine nucleotide biosynthesis pathway. The protein is Aspartate carbamoyltransferase catalytic subunit of Pseudomonas paraeruginosa (strain DSM 24068 / PA7) (Pseudomonas aeruginosa (strain PA7)).